A 120-amino-acid chain; its full sequence is Ribosome-binding factor A (120 aa).

This sequence belongs to the RbfA family. As to quaternary structure, monomer. Binds 30S ribosomal subunits, but not 50S ribosomal subunits or 70S ribosomes.

It is found in the cytoplasm. Functionally, one of several proteins that assist in the late maturation steps of the functional core of the 30S ribosomal subunit. Associates with free 30S ribosomal subunits (but not with 30S subunits that are part of 70S ribosomes or polysomes). Required for efficient processing of 16S rRNA. May interact with the 5'-terminal helix region of 16S rRNA. This is Ribosome-binding factor A from Campylobacter jejuni subsp. jejuni serotype O:6 (strain 81116 / NCTC 11828).